The sequence spans 186 residues: ADP-ribosylation factor-like protein 8 (186 aa).

The note=Mediates targeting to membranes intramembrane region spans 1-19 (MLALINRILEWFKSIFWKE). GTP contacts are provided by residues 29–35 (QFSGKTT), 71–75 (DIGGQ), and 130–133 (NKRD).

Belongs to the small GTPase superfamily. Arf family. In terms of assembly, interacts with tubulin. Interacts (in GTP-bound form) with Rilpl. Interacts with unc-104. Expressed throughout development, from embryo to adult stage, in different tissues such as larval motor neurons, salivary glands, testis and ovaries (at protein level).

Its subcellular location is the lysosome membrane. The protein resides in the synapse. The protein localises to the cell projection. It localises to the axon. It is found in the perikaryon. Required for normal functioning of the late endocytic pathway including lysosome motility and late endosome-lysosome fusion. Not required for the delivery of lysosomal membrane protein-containing vesicles to late endosomes. In larval motor neurons, mediates the anterograde axonal long-range transport of presynaptic lysosome-related vesicles required for presynaptic biogenesis and synaptic function. Acts downstream of Rab2 during presynaptic precursor vesicle biogenesis. Essential role in chromosome segregation. This is ADP-ribosylation factor-like protein 8 from Drosophila melanogaster (Fruit fly).